The sequence spans 263 residues: 4-hydroxy-2-oxo-heptane-1,7-dioate aldolase (263 aa).

Catalysis depends on histidine 45, which acts as the Proton acceptor. Position 147 (glutamine 147) interacts with substrate. Glutamate 149 is an a divalent metal cation binding site. Residues alanine 174 and aspartate 175 each contribute to the substrate site. Aspartate 175 provides a ligand contact to a divalent metal cation.

It belongs to the HpcH/HpaI aldolase family. In terms of assembly, homohexamer; trimer of dimers. It depends on a divalent metal cation as a cofactor.

It catalyses the reaction 4-hydroxy-2-oxoheptanedioate = succinate semialdehyde + pyruvate. It participates in aromatic compound metabolism; 4-hydroxyphenylacetate degradation; pyruvate and succinate semialdehyde from 4-hydroxyphenylacetate: step 7/7. In terms of biological role, catalyzes the reversible retro-aldol cleavage of 4-hydroxy-2-ketoheptane-1,7-dioate (HKHD) to pyruvate and succinic semialdehyde. This chain is 4-hydroxy-2-oxo-heptane-1,7-dioate aldolase, found in Salmonella typhimurium (strain LT2 / SGSC1412 / ATCC 700720).